The primary structure comprises 204 residues: Guanylate kinase (204 aa).

The Guanylate kinase-like domain maps to 18-196; it reads PKLFTISAPA…SYEILKSIFI (179 aa). Position 25–32 (25–32) interacts with ATP; that stretch reads APAGAGKT.

Belongs to the guanylate kinase family.

Its subcellular location is the cytoplasm. The enzyme catalyses GMP + ATP = GDP + ADP. Its function is as follows. Essential for recycling GMP and indirectly, cGMP. The protein is Guanylate kinase of Chlamydia caviae (strain ATCC VR-813 / DSM 19441 / 03DC25 / GPIC) (Chlamydophila caviae).